Consider the following 304-residue polypeptide: MSSEMPLPTTIVAPTCSMGEKNVLKRYRRQVSSTRNFKRHVNTNVLRKRRLAAGVRCHDRFYKRLYAEAMCLGSQVYDWPGRSFAKIFGKVMVLDVFKQLTDFRLVFEVNLERRRPDCICMFKLPRDLWEVGCDGVCVILELKTCKFSRNLKTRSKHEQRLTGIKQLLDSKSLIGQIAPQGSDCIVICPMLVFVARRKLSVLHVMCLKKRHIVTDFHRLCSILATASDYKARITDTHKILKRHNTNTIHIQRRSGKASANVTDLRNHIACNKTATLSFSNNQERTGGTAMRNMANIIARLVQRP.

It belongs to the HHV-1 UL24 protein family.

The protein resides in the host cytoplasm. The protein localises to the host nucleus. Its subcellular location is the host Golgi apparatus. Functionally, may play a role in the dispersal of host nucleolin from the nucleolus throughout the nucleus leading to a decrease in ribosome biogenesis. The chain is Protein UL24 homolog (MDV035) from Gallid herpesvirus 2 (strain Chicken/Md5/ATCC VR-987) (GaHV-2).